The primary structure comprises 261 residues: METEVEHTGLAIHPMDQFIVRKLFCHTESASPMNECTTNIHWYDITNVTMWMAIAVLVIAAILVLGTRRRAIVPSRSQSVAELLYGFIHNMVEEVTGHEGVKYFPYVMTLFLFVLCGNVLGLLPLSFTTTSHMAVTVPLALMVFVGVTALGFMRNGPGFLKMFWVTSAPLAIRPVLAVIEVISYFVRPVSHSIRLAGNMMAGHAVIKVIAGFASIAVVSPVVVGAVTAIYALELLVAVVQAYVFTILTCVYLRDAVGDAHH.

6 helical membrane-spanning segments follow: residues 45-65 (ITNV…ILVL), 107-127 (VMTL…PLSF), 133-153 (MAVT…LGFM), 162-182 (MFWV…IEVI), 209-229 (IAGF…VTAI), and 232-252 (LELL…CVYL).

The protein belongs to the ATPase A chain family. As to quaternary structure, F-type ATPases have 2 components, CF(1) - the catalytic core - and CF(0) - the membrane proton channel. CF(1) has five subunits: alpha(3), beta(3), gamma(1), delta(1), epsilon(1). CF(0) has four main subunits: a, b, b' and c.

The protein localises to the cell inner membrane. Key component of the proton channel; it plays a direct role in the translocation of protons across the membrane. This Cereibacter sphaeroides (strain ATCC 17025 / ATH 2.4.3) (Rhodobacter sphaeroides) protein is ATP synthase subunit a.